The sequence spans 410 residues: Venom metalloproteinase 2 (410 aa).

Positions 1–22 (MDTFILTYSILFLALFIESIHS) are cleaved as a signal peptide. Residues asparagine 64, asparagine 112, asparagine 187, asparagine 231, asparagine 292, and asparagine 307 are each glycosylated (N-linked (GlcNAc...) asparagine). A Peptidase M12B domain is found at 214–410 (FYPKLLVLVD…NNNVSKFIWS (197 aa)). A Zn(2+)-binding site is contributed by histidine 365. Glutamate 366 is a catalytic residue. Histidine 369 and histidine 375 together coordinate Zn(2+). N-linked (GlcNAc...) asparagine glycosylation occurs at asparagine 403.

The protein in the C-terminal section; belongs to the venom metalloproteinase (M12B) family. Monomer. It depends on Zn(2+) as a cofactor. In terms of tissue distribution, expressed by the venom gland.

It localises to the secreted. The gelatinase activity is inhibited by EDTA. Functionally, the recombinant protein has gelatinase activity. In vivo, injection of this recombinant into fifth instar L.oleracea (host) larvae results in partial insect mortality associated with the molt to sixth instar, with surviving insects showing retarded development and growth. In Eulophus pennicornis (Parasitoid wasp), this protein is Venom metalloproteinase 2.